Consider the following 247-residue polypeptide: MADS-box transcription factor 1 (247 aa).

Residues 1–61 enclose the MADS-box domain; it reads MGRGRVELKR…GKLYEFCSTS (61 aa). Positions 91-181 constitute a K-box domain; that stretch reads ELSSQQEYLK…RQRMEGYQIN (91 aa).

Expressed abundantly in the seed coat and to lesser extent in young buds, carpels, petals, and stamen.

The protein localises to the nucleus. Functionally, probable transcription factor. The chain is MADS-box transcription factor 1 from Pisum sativum (Garden pea).